A 249-amino-acid chain; its full sequence is DNA polymerase sliding clamp (249 aa).

It belongs to the PCNA family. Homotrimer. The subunits circularize to form a toroid; DNA passes through its center. Replication factor C (RFC) is required to load the toroid on the DNA.

In terms of biological role, sliding clamp subunit that acts as a moving platform for DNA processing. Responsible for tethering the catalytic subunit of DNA polymerase and other proteins to DNA during high-speed replication. In Thermococcus sibiricus (strain DSM 12597 / MM 739), this protein is DNA polymerase sliding clamp.